The following is a 69-amino-acid chain: Proteinase inhibitor (69 aa).

N-acetylserine is present on Ser-1. Cysteines 4 and 49 form a disulfide.

Its function is as follows. In vitro, strong inhibitor of bovine beta-trypsin, weak inhibitor of alpha-chymotrypsin, subtilisin BPN', subtilisin Carlsberg and cathepsin G. In Linum usitatissimum (Flax), this protein is Proteinase inhibitor.